The chain runs to 120 residues: Protein TCL1B4 (120 aa).

It belongs to the TCL1 family.

The chain is Protein TCL1B4 (Tcl1b4) from Mus musculus (Mouse).